Here is a 127-residue protein sequence, read N- to C-terminus: Small ribosomal subunit protein uS11 (127 aa).

It belongs to the universal ribosomal protein uS11 family. In terms of assembly, part of the 30S ribosomal subunit.

Located on the platform of the 30S subunit. The sequence is that of Small ribosomal subunit protein uS11 from Halobacterium salinarum (strain ATCC 700922 / JCM 11081 / NRC-1) (Halobacterium halobium).